We begin with the raw amino-acid sequence, 107 residues long: ATP-dependent Clp protease adapter protein ClpS (107 aa).

It belongs to the ClpS family. Binds to the N-terminal domain of the chaperone ClpA.

Functionally, involved in the modulation of the specificity of the ClpAP-mediated ATP-dependent protein degradation. This Acinetobacter baylyi (strain ATCC 33305 / BD413 / ADP1) protein is ATP-dependent Clp protease adapter protein ClpS.